A 167-amino-acid polypeptide reads, in one-letter code: uncharacterized protein (167 aa).

This is an uncharacterized protein from Mycobacterium tuberculosis (strain CDC 1551 / Oshkosh).